We begin with the raw amino-acid sequence, 1311 residues long: Ubiquitin carboxyl-terminal hydrolase 36 (1311 aa).

Composition is skewed to low complexity over residues 120 to 134 (AAAA…SAGS) and 156 to 174 (STPT…SSSS). The interval 120–189 (AAAATNNGNS…NPNELPKPKR (70 aa)) is disordered. In terms of domain architecture, USP spans 212-533 (AGMINVGNTC…NSYIMFYELD (322 aa)). The active-site Nucleophile is C221. Residue H492 is the Proton acceptor of the active site. A disordered region spans residues 546-575 (NGLRQLSNGHHHHQQQQQQHQQQQQQQPTV). A compositionally biased stretch (low complexity) spans 560-572 (QQQQQHQQQQQQQ). S581 is subject to Phosphoserine. 3 disordered regions span residues 587–620 (TRFI…GHSQ), 640–1095 (KFQE…GCLN), and 1136–1311 (DHGD…QQQS). Low complexity-rich tracts occupy residues 605–616 (TTTTTATNNTTN), 660–716 (APAV…QQQQ), and 759–774 (TLTL…STPT). Residue T767 is modified to Phosphothreonine. 2 positions are modified to phosphoserine: S787 and S789. A compositionally biased stretch (low complexity) spans 795–826 (SSGTPSSSTPTTTTTAAAAAASSPMQATAAAT). The segment covering 836–853 (ARKRSLPDHHHHHPHHHV) has biased composition (basic residues). Residues 869-879 (PATNFNSSSSK) are compositionally biased toward polar residues. Residues 880–889 (QKTDAIDEIF) are compositionally biased toward basic and acidic residues. Residues 896–905 (NKKRINNKNQ) show a composition bias toward basic residues. Acidic residues predominate over residues 910–920 (GDEEEDDEETL). Low complexity-rich tracts occupy residues 925–942 (NNSS…PTTN) and 950–979 (VSSS…STSA). Residues 980–989 (PPSPKTPPSP) are compositionally biased toward pro residues. S982 is modified (phosphoserine). Phosphothreonine is present on T985. The residue at position 988 (S988) is a Phosphoserine. Over residues 1006-1020 (DDDDDEEEEDEDDEE) the composition is skewed to acidic residues. Low complexity predominate over residues 1037-1050 (PFSSQQKPTPSPST). S1047 carries the post-translational modification Phosphoserine. Position 1050 is a phosphothreonine (T1050). A compositionally biased stretch (polar residues) spans 1060–1081 (FNGTSSSTPHVGNGYQSEPSTP). 2 stretches are compositionally biased toward low complexity: residues 1154 to 1176 (VVTT…TADA) and 1204 to 1221 (TANG…PGYN). Residues 1246–1255 (QHASSSYRSN) are compositionally biased toward polar residues. Gly residues predominate over residues 1267 to 1276 (GGNGGGGSGG).

Belongs to the peptidase C19 family. Interacts with atms/PAF1, but not with CycT.

It is found in the nucleus. The protein localises to the nucleolus. The enzyme catalyses Thiol-dependent hydrolysis of ester, thioester, amide, peptide and isopeptide bonds formed by the C-terminal Gly of ubiquitin (a 76-residue protein attached to proteins as an intracellular targeting signal).. In terms of biological role, required for maintaining multiple types of adult stem cells, including male and female germline, epithelial follicle cell and intestinal stem cells. May function as a transcriptional repressor by continually deubiquiting histone H2B at the promoters of genes critical for cellular differentiation, thereby preventing histone H3 'Lys-4' trimethylation (H3K4). Controls selective autophagy activation by ubiquitinated proteins. This chain is Ubiquitin carboxyl-terminal hydrolase 36 (Usp36), found in Drosophila willistoni (Fruit fly).